A 602-amino-acid polypeptide reads, in one-letter code: Sulfite reductase [NADPH] flavoprotein alpha-component (602 aa).

The Flavodoxin-like domain maps to 68–206 (ITIISASQTG…NYIQWSEELL (139 aa)). FMN is bound by residues 74-79 (SQTGNA), 121-124 (STQG), and 157-166 (LGDVSYNLFC). An FAD-binding FR-type domain is found at 237 to 451 (YKPAVATVLL…VEEKSNFRLP (215 aa)). FAD is bound by residues threonine 325, lysine 359, 389–392 (RLYS), 407–409 (TVG), and 422–425 (GGSS). NADP(+) contacts are provided by residues 522–523 (SR), 528–532 (KIYVQ), and aspartate 564. Tyrosine 602 serves as a coordination point for FAD.

It belongs to the NADPH-dependent sulphite reductase flavoprotein subunit CysJ family. This sequence in the N-terminal section; belongs to the flavodoxin family. The protein in the C-terminal section; belongs to the flavoprotein pyridine nucleotide cytochrome reductase family. Alpha(8)-beta(8). The alpha component is a flavoprotein, the beta component is a hemoprotein. FAD is required as a cofactor. The cofactor is FMN.

It catalyses the reaction hydrogen sulfide + 3 NADP(+) + 3 H2O = sulfite + 3 NADPH + 4 H(+). It functions in the pathway sulfur metabolism; hydrogen sulfide biosynthesis; hydrogen sulfide from sulfite (NADPH route): step 1/1. Its function is as follows. Component of the sulfite reductase complex that catalyzes the 6-electron reduction of sulfite to sulfide. This is one of several activities required for the biosynthesis of L-cysteine from sulfate. The flavoprotein component catalyzes the electron flow from NADPH -&gt; FAD -&gt; FMN to the hemoprotein component. In Buchnera aphidicola subsp. Schizaphis graminum (strain Sg), this protein is Sulfite reductase [NADPH] flavoprotein alpha-component.